Here is a 552-residue protein sequence, read N- to C-terminus: Gamma-aminobutyric acid receptor subunit alpha-4 (552 aa).

The N-terminal stretch at 1–35 (MVSVQKVPAIVLCSGVSLALLHVLCLATCLNESPG) is a signal peptide. Topologically, residues 36 to 259 (QNSKDEKLCP…FHLRRKMGYF (224 aa)) are extracellular. N47 is a glycosylation site (N-linked (GlcNAc...) asparagine). R100 contributes to the 4-aminobutanoate binding site. 2 N-linked (GlcNAc...) asparagine glycosylation sites follow: N144 and N157. 4-aminobutanoate is bound at residue T163. A disulfide bridge links C172 with C186. The helical transmembrane segment at 260 to 280 (MIQTYIPCIMTVILSQVSFWI) threads the bilayer. The Cytoplasmic segment spans residues 281–284 (NKES). Residues 285–305 (VPARTVFGITTVLTMTTLSIS) form a helical membrane-spanning segment. Residues 306 to 318 (ARHSLPKVSYATA) are Extracellular-facing. Residues 319–341 (MDWFIAVCFAFVFSALIEFAAVN) traverse the membrane as a helical segment. At 342 to 515 (YFTNIQMQKA…PPPSGSGTSK (174 aa)) the chain is on the cytoplasmic side. 3 disordered regions span residues 353-436 (KKIS…NPFS), 448-470 (ARGLSSAASPSPHGTLQPAPLRS), and 486-513 (TTVNTTGVPGNVSATPPPSAPPPSGSGT). Over residues 403–423 (RTEVGNHSSKTTAAQESSETT) the composition is skewed to polar residues. Composition is skewed to low complexity over residues 448–458 (ARGLSSAASPS) and 486–499 (TTVNTTGVPGNVSA). Over residues 500-509 (TPPPSAPPPS) the composition is skewed to pro residues. A helical membrane pass occupies residues 516 to 538 (IDKYARILFPVTFGAFNMVYWVV). Topologically, residues 539 to 552 (YLSKDTMEKSESLM) are extracellular.

This sequence belongs to the ligand-gated ion channel (TC 1.A.9) family. Gamma-aminobutyric acid receptor (TC 1.A.9.5) subfamily. GABRA4 sub-subfamily. As to quaternary structure, heteropentamer, formed by a combination of alpha (GABRA1-6), beta (GABRB1-3), gamma (GABRG1-3), delta (GABRD), epsilon (GABRE), rho (GABRR1-3), pi (GABRP) and theta (GABRQ) chains, each subunit exhibiting distinct physiological and pharmacological properties. Expressed in the brain.

It is found in the cell membrane. The protein resides in the postsynaptic cell membrane. With respect to regulation, potentiated by histamine. Functionally, alpha subunit of the heteropentameric ligand-gated chloride channel gated by gamma-aminobutyric acid (GABA), a major inhibitory neurotransmitter in the brain. GABA-gated chloride channels, also named GABA(A) receptors (GABAAR), consist of five subunits arranged around a central pore and contain GABA active binding site(s) located at the alpha and beta subunit interface(s). Alpha-4/GABRA4 subunit often assembles with delta or gamma-2 subunits, in combination with beta subunits. When activated by GABA, GABAARs selectively allow the flow of chloride anions across the cell membrane down their electrochemical gradient. GABAARs containing alpha-4 are predominantly extrasynaptic, contributing to tonic inhibition in dentate granule cells and thalamic relay neurons. Extrasynaptic alpha-4-containing GABAARs control levels of excitability and network activity. GABAAR containing alpha-4-beta-3-delta subunits can simultaneously bind GABA and histamine where histamine binds at the interface of two neighboring beta subunits, which may be involved in the regulation of sleep and wakefulness. This chain is Gamma-aminobutyric acid receptor subunit alpha-4, found in Rattus norvegicus (Rat).